Consider the following 291-residue polypeptide: Phosphatidylserine decarboxylase proenzyme (291 aa).

Catalysis depends on charge relay system; for autoendoproteolytic cleavage activity residues aspartate 93, histidine 150, and serine 253. Serine 253 functions as the Schiff-base intermediate with substrate; via pyruvic acid; for decarboxylase activity in the catalytic mechanism. The residue at position 253 (serine 253) is a Pyruvic acid (Ser); by autocatalysis.

It belongs to the phosphatidylserine decarboxylase family. PSD-B subfamily. Prokaryotic type I sub-subfamily. Heterodimer of a large membrane-associated beta subunit and a small pyruvoyl-containing alpha subunit. Requires pyruvate as cofactor. Post-translationally, is synthesized initially as an inactive proenzyme. Formation of the active enzyme involves a self-maturation process in which the active site pyruvoyl group is generated from an internal serine residue via an autocatalytic post-translational modification. Two non-identical subunits are generated from the proenzyme in this reaction, and the pyruvate is formed at the N-terminus of the alpha chain, which is derived from the carboxyl end of the proenzyme. The autoendoproteolytic cleavage occurs by a canonical serine protease mechanism, in which the side chain hydroxyl group of the serine supplies its oxygen atom to form the C-terminus of the beta chain, while the remainder of the serine residue undergoes an oxidative deamination to produce ammonia and the pyruvoyl prosthetic group on the alpha chain. During this reaction, the Ser that is part of the protease active site of the proenzyme becomes the pyruvoyl prosthetic group, which constitutes an essential element of the active site of the mature decarboxylase.

The protein resides in the cell membrane. It carries out the reaction a 1,2-diacyl-sn-glycero-3-phospho-L-serine + H(+) = a 1,2-diacyl-sn-glycero-3-phosphoethanolamine + CO2. Its pathway is phospholipid metabolism; phosphatidylethanolamine biosynthesis; phosphatidylethanolamine from CDP-diacylglycerol: step 2/2. Catalyzes the formation of phosphatidylethanolamine (PtdEtn) from phosphatidylserine (PtdSer). The protein is Phosphatidylserine decarboxylase proenzyme of Alcanivorax borkumensis (strain ATCC 700651 / DSM 11573 / NCIMB 13689 / SK2).